The sequence spans 213 residues: Pyrrolidone-carboxylate peptidase (213 aa).

Active-site residues include glutamate 78, cysteine 141, and histidine 165.

This sequence belongs to the peptidase C15 family. Homotetramer.

The protein resides in the cytoplasm. It carries out the reaction Release of an N-terminal pyroglutamyl group from a polypeptide, the second amino acid generally not being Pro.. In terms of biological role, removes 5-oxoproline from various penultimate amino acid residues except L-proline. The protein is Pyrrolidone-carboxylate peptidase of Clostridium perfringens (strain ATCC 13124 / DSM 756 / JCM 1290 / NCIMB 6125 / NCTC 8237 / Type A).